The following is a 595-amino-acid chain: Pentatricopeptide repeat-containing protein At4g21065 (595 aa).

PPR repeat units follow at residues 84-118 (NVFIWNTLIRGYAEIGNSISAFSLYREMRVSGLVE), 120-154 (DTHTYPFLIKAVTTMADVRLGETIHSVVIRSGFGS), 155-185 (LIYVQNSLLHLYANCGDVASAYKVFDKMPEK), 186-220 (DLVAWNSVINGFAENGKPEEALALYTEMNSKGIKP), 221-255 (DGFTIVSLLSACAKIGALTLGKRVHVYMIKVGLTR), 256-290 (NLHSSNVLLDLYARCGRVEEAKTLFDEMVDKNSVS), 291-317 (WTSLIVGLAVNGFGKEAIELFKYMEST), 323-353 (CEITFVGILYACSHCGMVKEGFEYFRRMREE), and 359-389 (RIEHFGCMVDLLARAGQVKKAYEYIKSMPMQ). The interval 394-469 (IWRTLLGACT…VPGHSLVEVG (76 aa)) is type E motif. Positions 470-500 (NRVHEFLMGDKSHPQSDAIYAKLKEMTGRLR) are type E(+) motif. Residues 501–595 (SEGYVPQISN…NGSCSCQDYW (95 aa)) form a type DYW motif region.

The protein belongs to the PPR family. PCMP-H subfamily.

In Arabidopsis thaliana (Mouse-ear cress), this protein is Pentatricopeptide repeat-containing protein At4g21065 (PCMP-H28).